Consider the following 296-residue polypeptide: Phosphoribosylaminoimidazole-succinocarboxamide synthase (296 aa).

This sequence belongs to the SAICAR synthetase family.

The catalysed reaction is 5-amino-1-(5-phospho-D-ribosyl)imidazole-4-carboxylate + L-aspartate + ATP = (2S)-2-[5-amino-1-(5-phospho-beta-D-ribosyl)imidazole-4-carboxamido]succinate + ADP + phosphate + 2 H(+). It participates in purine metabolism; IMP biosynthesis via de novo pathway; 5-amino-1-(5-phospho-D-ribosyl)imidazole-4-carboxamide from 5-amino-1-(5-phospho-D-ribosyl)imidazole-4-carboxylate: step 1/2. The protein is Phosphoribosylaminoimidazole-succinocarboxamide synthase of Pelobacter propionicus (strain DSM 2379 / NBRC 103807 / OttBd1).